A 601-amino-acid chain; its full sequence is ATP-dependent lipid A-core flippase (601 aa).

The next 6 helical transmembrane spans lie at 35-55, 77-97, 150-170, 173-193, 263-283, and 286-306; these read FAVA…LAFL, LAII…AILM, AVTS…VIFY, WQLA…IAKF, MEFL…YQVI, and SSTP…YEPV. The ABC transmembrane type-1 domain maps to 36 to 318; it reads AVAMVCMLIA…LTNVNNTIQQ (283 aa). An ABC transporter domain is found at 352–585; it reads IEIRNISFAY…RGEYYKLHQL (234 aa). An ATP-binding site is contributed by 384-391; it reads GMSGGGKT.

It belongs to the ABC transporter superfamily. Lipid exporter (TC 3.A.1.106) family. Homodimer.

The protein resides in the cell inner membrane. It carries out the reaction ATP + H2O + lipid A-core oligosaccharideSide 1 = ADP + phosphate + lipid A-core oligosaccharideSide 2.. Involved in lipopolysaccharide (LPS) biosynthesis. Translocates lipid A-core from the inner to the outer leaflet of the inner membrane. Transmembrane domains (TMD) form a pore in the inner membrane and the ATP-binding domain (NBD) is responsible for energy generation. This chain is ATP-dependent lipid A-core flippase, found in Syntrophus aciditrophicus (strain SB).